The chain runs to 695 residues: MAFWKPGTEKPRFEEDGEGGIVFMSNNLASSSSSSYGYANIEKQRQRLPVYKYRTEILYLVENHATTIIVGETGSGKTTQIPQYLKEAGWAEGGRVIACTQPRRLAVQAVSARVAEEMGVNLGEEVGYTIRFEDHTTSGVTSVKFLTDGVLIREMMEDPLLTKYSVIMIDEAHERSISTDILLGLLKKIQRRRPELRLIISSATIEAKTMSNFFNSSKKRHAPEGSTPGPKLEPAILSVEGRGFSVKIHYVEEPVSDYIRSVVSTILLINEREPPGDVLVFLTGQEDIETAIKLLEEEAHSNQKNSSGLLPLPLYSGLSRSEQELIFTPTPRGKRKVILSTNIAETSLTLEGVVYVIDSGFSKQKFYNPISDIESLVVAPISKASARQRSGRAGRVRPGKCYRLYTEDYFLNQMPGEGIPEMQRSNLVSTVIQLKALGIDNILGFDWPAPPSSEAMIRALEVLYSLQILDDDAKLTSPTGFQVAELPLDPMISKMILASSELGCSHEIITIAAVLSVQSVWIIARGVQKEQDEAKLRFAAAEGDHVTFLNVYKGFLESKKPTQWCYKNFLNYQSMKKVVEIRDQLKRIARRLGITLKSCDGDMEAVRKAVTAGFFANACRLEPHSNGVYKTIRGSEEVYIHPSSVLFRVNPKWVVYQSIVSTERQYMRNVVTINPSWLTEVAPHFYQNRQNAMSF.

A Helicase ATP-binding domain is found at 58–223 (LYLVENHATT…FNSSKKRHAP (166 aa)). 71-78 (GETGSGKT) contacts ATP. A DEAH box motif is present at residues 170–173 (DEAH). A Helicase C-terminal domain is found at 261-438 (SVVSTILLIN…STVIQLKALG (178 aa)).

The protein belongs to the DEAD box helicase family. DEAH subfamily. DDX35 sub-subfamily.

It carries out the reaction ATP + H2O = ADP + phosphate + H(+). May be involved in pre-mRNA splicing. The sequence is that of Probable pre-mRNA-splicing factor ATP-dependent RNA helicase DEAH9 from Arabidopsis thaliana (Mouse-ear cress).